Here is a 116-residue protein sequence, read N- to C-terminus: Large ribosomal subunit protein eL31 (116 aa).

The protein belongs to the eukaryotic ribosomal protein eL31 family.

The sequence is that of Large ribosomal subunit protein eL31 (RPL31) from Chlamydomonas reinhardtii (Chlamydomonas smithii).